The chain runs to 518 residues: MDVIGRQHLRQMWDDLAEVYDKKTALIFESAQGKVRQFSYSELNEEINRAANLFHACGIKKGDHVALHLDNCPEFFFCWFGLAKIGAVMVPINARFMYEESAWIINHCQAHFVVTSDNFSPIYQPMLHDKHSPLTQLFLITENCLPTEQGVVDFLSEKAKHPVTLNHHTPLSVDDTAEILFTSGTTSQPKGVVITHYNLRIAGYYSSWQNALREDDIYLTVMPAFHIDCQCTASLPAYSVGATIVLLEKYSARASWKQILKYQATVTECIPMMMRTSMAQPVSPDEKQHKLREVMSYLNLADKEKDASIERLNVRLLTSHGMTETIVGLIGDRPGDKRRWPSIGRPGFCYQAQIRDKQNQQVPNGVVGEICVKGEAGKTLFKEYYNRPDATEKALEPDGWLHTGDYGYRDDEGFFYFVDRSCNMIKRGGENVSCIEIENIIASHPKIQDVAVIGVPDDIRDEAIKAFVVLVDGETLSEEAFFAFCEQNMAKFKVPSAVEFKQGLPRNCSGKVIKKHLQ.

The protein belongs to the ATP-dependent AMP-binding enzyme family.

The catalysed reaction is 4-(trimethylamino)butanoate + ATP + CoA = 4-(trimethylamino)butanoyl-CoA + AMP + diphosphate. It catalyses the reaction crotonobetaine + ATP + CoA = crotonobetainyl-CoA + AMP + diphosphate. The enzyme catalyses (R)-carnitine + ATP + CoA = (R)-carnitinyl-CoA + AMP + diphosphate. It functions in the pathway amine and polyamine metabolism; carnitine metabolism. In terms of biological role, catalyzes the transfer of CoA to carnitine, generating the initial carnitinyl-CoA needed for the CaiB reaction cycle. Also has activity toward crotonobetaine and gamma-butyrobetaine. This chain is Crotonobetaine/carnitine--CoA ligase, found in Proteus sp. (strain LE138).